A 308-amino-acid chain; its full sequence is Ribosomal protein L11 methyltransferase (308 aa).

Positions 148, 169, 191, and 239 each coordinate S-adenosyl-L-methionine.

The protein belongs to the methyltransferase superfamily. PrmA family.

The protein resides in the cytoplasm. The catalysed reaction is L-lysyl-[protein] + 3 S-adenosyl-L-methionine = N(6),N(6),N(6)-trimethyl-L-lysyl-[protein] + 3 S-adenosyl-L-homocysteine + 3 H(+). Functionally, methylates ribosomal protein L11. The protein is Ribosomal protein L11 methyltransferase of Psychrobacter cryohalolentis (strain ATCC BAA-1226 / DSM 17306 / VKM B-2378 / K5).